The chain runs to 726 residues: Catalase-peroxidase (726 aa).

The signal sequence occupies residues 1 to 16 (MDNPTDSAGKCPVAHG). The interval 1 to 26 (MDNPTDSAGKCPVAHGNTPRSRSNRD) is disordered. The segment at residues 96–218 (WHSAGTYRIT…LGAVQMGLIY (123 aa)) is a cross-link (tryptophyl-tyrosyl-methioninium (Trp-Tyr) (with M-244)). Histidine 97 serves as the catalytic Proton acceptor. The tryptophyl-tyrosyl-methioninium (Tyr-Met) (with W-96) cross-link spans 218 to 244 (YVNPEGPNGTPDPLASARDIRETFARM). Histidine 259 is a binding site for heme b.

It belongs to the peroxidase family. Peroxidase/catalase subfamily. As to quaternary structure, homodimer or homotetramer. It depends on heme b as a cofactor. Formation of the three residue Trp-Tyr-Met cross-link is important for the catalase, but not the peroxidase activity of the enzyme.

It carries out the reaction H2O2 + AH2 = A + 2 H2O. The enzyme catalyses 2 H2O2 = O2 + 2 H2O. Functionally, bifunctional enzyme with both catalase and broad-spectrum peroxidase activity. The chain is Catalase-peroxidase from Rhizobium johnstonii (strain DSM 114642 / LMG 32736 / 3841) (Rhizobium leguminosarum bv. viciae).